The following is a 490-amino-acid chain: tRNA-guanine(15) transglycosylase (490 aa).

Asp-90 acts as the Nucleophile in catalysis. Substrate contacts are provided by Asp-125 and Ala-193. Residues Cys-276, Cys-278, and Cys-281 each coordinate Zn(2+).

Belongs to the archaeosine tRNA-ribosyltransferase family. Zn(2+) serves as cofactor.

It catalyses the reaction guanosine(15) in tRNA + 7-cyano-7-deazaguanine = 7-cyano-7-carbaguanosine(15) in tRNA + guanine. It participates in tRNA modification; archaeosine-tRNA biosynthesis. Its function is as follows. Exchanges the guanine residue with 7-cyano-7-deazaguanine (preQ0) at position 15 in the dihydrouridine loop (D-loop) of archaeal tRNAs. This chain is tRNA-guanine(15) transglycosylase, found in Methanosarcina barkeri (strain Fusaro / DSM 804).